Reading from the N-terminus, the 118-residue chain is Immunoglobulin heavy variable 4-31 (118 aa).

Positions 1 to 19 (MKHLWFFLLLVAAPRWVLS) are cleaved as a signal peptide. The interval 20–44 (QVQLQESGPGLVKPSQTLSLTCTVS) is framework-1. Residues 20–118 (QVQLQESGPG…ADTAVYYCAR (99 aa)) form the Ig-like domain. The cysteines at positions 41 and 116 are disulfide-linked. The segment at 45–54 (GGSISSGGYY) is complementarity-determining-1. Residues 55–71 (WSWIRQHPGKGLEWIGY) are framework-2. Residues 72–78 (IYYSGST) form a complementarity-determining-2 region. Residues 79–116 (YYNPSLKSLVTISVDTSKNQFSLKLSSVTAADTAVYYC) form a framework-3 region. Positions 117–118 (AR) are complementarity-determining-3.

Immunoglobulins are composed of two identical heavy chains and two identical light chains; disulfide-linked.

It localises to the secreted. It is found in the cell membrane. Functionally, v region of the variable domain of immunoglobulin heavy chains that participates in the antigen recognition. Immunoglobulins, also known as antibodies, are membrane-bound or secreted glycoproteins produced by B lymphocytes. In the recognition phase of humoral immunity, the membrane-bound immunoglobulins serve as receptors which, upon binding of a specific antigen, trigger the clonal expansion and differentiation of B lymphocytes into immunoglobulins-secreting plasma cells. Secreted immunoglobulins mediate the effector phase of humoral immunity, which results in the elimination of bound antigens. The antigen binding site is formed by the variable domain of one heavy chain, together with that of its associated light chain. Thus, each immunoglobulin has two antigen binding sites with remarkable affinity for a particular antigen. The variable domains are assembled by a process called V-(D)-J rearrangement and can then be subjected to somatic hypermutations which, after exposure to antigen and selection, allow affinity maturation for a particular antigen. The protein is Immunoglobulin heavy variable 4-31 of Homo sapiens (Human).